The chain runs to 458 residues: Phosphoglucosamine mutase (458 aa).

The Phosphoserine intermediate role is filled by serine 106. Mg(2+)-binding residues include serine 106, aspartate 247, aspartate 249, and aspartate 251. Position 106 is a phosphoserine (serine 106).

It belongs to the phosphohexose mutase family. It depends on Mg(2+) as a cofactor. Activated by phosphorylation.

The enzyme catalyses alpha-D-glucosamine 1-phosphate = D-glucosamine 6-phosphate. Its function is as follows. Catalyzes the conversion of glucosamine-6-phosphate to glucosamine-1-phosphate. This is Phosphoglucosamine mutase from Chlamydia pneumoniae (Chlamydophila pneumoniae).